Here is a 379-residue protein sequence, read N- to C-terminus: Chaperone protein DnaJ (379 aa).

The region spanning 7–72 (CYYETLEVER…DKRAAYDRYG (66 aa)) is the J domain. The CR-type zinc-finger motif lies at 135–213 (GKTAQIEIPV…CTGSGRVTKE (79 aa)). Cys-148, Cys-151, Cys-165, Cys-168, Cys-187, Cys-190, Cys-201, and Cys-204 together coordinate Zn(2+). CXXCXGXG motif repeat units lie at residues 148-155 (CEACSGTG), 165-172 (CSTCGGAG), 187-194 (CPSCQGRG), and 201-208 (CPSCTGSG).

The protein belongs to the DnaJ family. Homodimer. Zn(2+) is required as a cofactor.

The protein localises to the cytoplasm. Functionally, participates actively in the response to hyperosmotic and heat shock by preventing the aggregation of stress-denatured proteins and by disaggregating proteins, also in an autonomous, DnaK-independent fashion. Unfolded proteins bind initially to DnaJ; upon interaction with the DnaJ-bound protein, DnaK hydrolyzes its bound ATP, resulting in the formation of a stable complex. GrpE releases ADP from DnaK; ATP binding to DnaK triggers the release of the substrate protein, thus completing the reaction cycle. Several rounds of ATP-dependent interactions between DnaJ, DnaK and GrpE are required for fully efficient folding. Also involved, together with DnaK and GrpE, in the DNA replication of plasmids through activation of initiation proteins. In Rhodopseudomonas palustris (strain ATCC BAA-98 / CGA009), this protein is Chaperone protein DnaJ.